The sequence spans 839 residues: Septin-interacting protein 1 (839 aa).

A disordered region spans residues 22–164 (INRPRGRQSR…ASERNVGAWE (143 aa)). A phosphoserine mark is found at Ser43 and Ser47. Thr53 carries the phosphothreonine modification. Residues 88 to 101 (LQADDEKGSQKEGA) show a composition bias toward basic and acidic residues. A compositionally biased stretch (acidic residues) spans 102-111 (EADQGEESDD). Positions 140–149 (SRKQPSTTFQ) are enriched in polar residues. In terms of domain architecture, G-patch spans 167-213 (TRGIGAKLLLQMGYEPGKGLGKDLQGISHPVQAHVRKGRGAIGAYGP). The stretch at 363–411 (IDNQERECSSQQAALESEHRKLEEIVQLERNHIRTLEESLERVERLIDN) forms a coiled coil.

Belongs to the TFP11/STIP family. Identified in the spliceosome C complex. Interacts with pnut.

Its subcellular location is the nucleus. May be involved in pre-mRNA splicing. The chain is Septin-interacting protein 1 (sip1) from Drosophila melanogaster (Fruit fly).